A 245-amino-acid polypeptide reads, in one-letter code: Phosphoribosyl isomerase A (245 aa).

Catalysis depends on Asp-11, which acts as the Proton acceptor. Catalysis depends on Asp-130, which acts as the Proton donor.

This sequence belongs to the HisA/HisF family.

It localises to the cytoplasm. It catalyses the reaction 1-(5-phospho-beta-D-ribosyl)-5-[(5-phospho-beta-D-ribosylamino)methylideneamino]imidazole-4-carboxamide = 5-[(5-phospho-1-deoxy-D-ribulos-1-ylimino)methylamino]-1-(5-phospho-beta-D-ribosyl)imidazole-4-carboxamide. It carries out the reaction N-(5-phospho-beta-D-ribosyl)anthranilate = 1-(2-carboxyphenylamino)-1-deoxy-D-ribulose 5-phosphate. It functions in the pathway amino-acid biosynthesis; L-histidine biosynthesis; L-histidine from 5-phospho-alpha-D-ribose 1-diphosphate: step 4/9. It participates in amino-acid biosynthesis; L-tryptophan biosynthesis; L-tryptophan from chorismate: step 3/5. Involved in both the histidine and tryptophan biosynthetic pathways. The protein is Phosphoribosyl isomerase A (priA) of Mycobacterium bovis (strain ATCC BAA-935 / AF2122/97).